Here is a 505-residue protein sequence, read N- to C-terminus: Pleckstrin homology domain-containing family D member 1 (505 aa).

Residues 28 to 136 (KVQLYGVLWK…WLEMLQESGK (109 aa)) enclose the PH domain. Positions 146–391 (EAMIKSLEAQ…KVRNKEKEER (246 aa)) form a coiled coil. The interval 264–284 (DKNQPQPLTNQSEQPPASDGL) is disordered. The span at 267-278 (QPQPLTNQSEQP) shows a compositional bias: polar residues. Arginine 502 carries the post-translational modification Omega-N-methylarginine.

This sequence belongs to the PLEKHD1 family.

The protein is Pleckstrin homology domain-containing family D member 1 (Plekhd1) of Mus musculus (Mouse).